A 271-amino-acid chain; its full sequence is 2,3,4,5-tetrahydropyridine-2,6-dicarboxylate N-succinyltransferase (271 aa).

2 residues coordinate substrate: arginine 102 and aspartate 139.

The protein belongs to the transferase hexapeptide repeat family. As to quaternary structure, homotrimer.

The protein resides in the cytoplasm. The catalysed reaction is (S)-2,3,4,5-tetrahydrodipicolinate + succinyl-CoA + H2O = (S)-2-succinylamino-6-oxoheptanedioate + CoA. Its pathway is amino-acid biosynthesis; L-lysine biosynthesis via DAP pathway; LL-2,6-diaminopimelate from (S)-tetrahydrodipicolinate (succinylase route): step 1/3. This is 2,3,4,5-tetrahydropyridine-2,6-dicarboxylate N-succinyltransferase from Coxiella burnetii (strain Dugway 5J108-111).